We begin with the raw amino-acid sequence, 122 residues long: Serum amyloid A-2 protein (122 aa).

Residues 1–18 form the signal peptide; that stretch reads MKPFLSIIFCFLVLGVDS. At Gln-19 the chain carries Pyrrolidone carboxylic acid. Positions 100–122 are disordered; sequence ANEWGRSGKDPNFFRPPGLPSKY.

It belongs to the SAA family. Apolipoprotein of the HDL complex. As to expression, expressed by the liver; secreted in plasma.

It is found in the secreted. Major acute phase reactant. The protein is Serum amyloid A-2 protein (SAA2) of Mesocricetus auratus (Golden hamster).